The primary structure comprises 145 residues: Acidic phospholipase A2 homolog textilotoxin C chain (145 aa).

A signal peptide spans 1 to 19; it reads MHPAHLLVLLGVYVSLLGA. Positions 20-27 are excised as a propeptide; sequence ARIPPLPL. Disulfide bonds link Cys-38/Cys-98, Cys-54/Cys-144, Cys-56/Cys-72, Cys-71/Cys-125, Cys-78/Cys-118, Cys-87/Cys-111, and Cys-105/Cys-116.

It belongs to the phospholipase A2 family. Group I subfamily. D49 sub-subfamily. Heterohexamer. 2 forms exist: 2 A or 2 B chains, 2 C chains and 2 covalently-linked D chains, and 1 A or 1 B, 1 C, 2 covalently-linked D chains and 2 differentially glycosylated covalently-linked D chains. Textilotoxin was originally described as pentameric. Expressed by the venom gland.

It is found in the secreted. Snake venom oligomeric phospholipase A2 that has potent presynaptic neurotoxicity. Chain C is not itself neurotoxic, but it is essential for the neurotoxicity of textilotoxin. Chain C possesses a very low phospholipase activity. The polypeptide is Acidic phospholipase A2 homolog textilotoxin C chain (Pseudonaja textilis (Eastern brown snake)).